The chain runs to 346 residues: Uroporphyrinogen decarboxylase (346 aa).

Substrate is bound by residues 21–25 (RQAGR), Phe-40, Asp-71, Tyr-146, Ser-201, and His-316.

This sequence belongs to the uroporphyrinogen decarboxylase family. In terms of assembly, homodimer.

It localises to the cytoplasm. It catalyses the reaction uroporphyrinogen III + 4 H(+) = coproporphyrinogen III + 4 CO2. It participates in porphyrin-containing compound metabolism; protoporphyrin-IX biosynthesis; coproporphyrinogen-III from 5-aminolevulinate: step 4/4. In terms of biological role, catalyzes the decarboxylation of four acetate groups of uroporphyrinogen-III to yield coproporphyrinogen-III. The polypeptide is Uroporphyrinogen decarboxylase (Rickettsia felis (strain ATCC VR-1525 / URRWXCal2) (Rickettsia azadi)).